A 1706-amino-acid polypeptide reads, in one-letter code: DDT domain-containing protein PTM (1706 aa).

A compositionally biased stretch (basic residues) spans 1-16 (MEAKVPRPRGRPRKRQ). 2 disordered regions span residues 1–27 (MEAK…KLNN) and 144–168 (VTNS…RGSD). The Nuclear localization signal motif lies at 9-18 (RGRPRKRQRL). Residues 148–160 (EDGDSYSDSESSE) are compositionally biased toward acidic residues. The 61-residue stretch at 192 to 252 (EEAVAHLLSV…LRALKGHLER (61 aa)) folds into the DDT domain. The span at 375 to 393 (YKEKEVTDSSTNESKDLDS) shows a compositional bias: basic and acidic residues. Residues 375–408 (YKEKEVTDSSTNESKDLDSRCTNGGSNEVSSDLD) are disordered. Residues 394–408 (RCTNGGSNEVSSDLD) show a composition bias toward polar residues. The PHD-type 1 zinc finger occupies 411 to 458 (SDECRICGMDGTLLCCDGCPLAYHSRCIGVVKMYIPDGPWFCPECTIN). Disordered stretches follow at residues 1165-1194 (KPPS…SVSK) and 1311-1345 (TNQK…PATP). Composition is skewed to polar residues over residues 1167 to 1194 (PSQQ…SVSK) and 1311 to 1323 (TNQK…SGLD). A compositionally biased stretch (basic and acidic residues) spans 1325–1336 (DSERMSEQKDSK). The next 5 helical transmembrane spans lie at 1539 to 1559 (ALGS…SILP), 1569 to 1589 (LAGP…GLFL), 1596 to 1616 (ANDL…LGLI), 1624 to 1644 (AALH…WCGL), and 1682 to 1702 (MLGL…YVLI).

As to quaternary structure, interacts (via the DDT domain) with CHR11 (via C-terminus).

Its subcellular location is the plastid. The protein resides in the chloroplast outer membrane. The protein localises to the nucleus. Its function is as follows. Membrane-bound transcription factor required for the plastid-to-nucleus retrograde signaling. Functions in multiple retrograde pathways. The plastid-to-nucleus signal plays an important role in the coordinated expression of both nuclear- and chloroplast-localized genes that encode photosynthesis-related proteins. In the nucleus, activates ABI4 transcription in a PHD-dependent manner associated with histone modifications. Localized primarily in the chloroplast outer membrane as dormant form and, in response to retrograde signals, is released from the membrane through proteolytic cleavage and its cleaved fragment containing the transcription factor domain is redistributed to the nucleus, where it regulates the expression of particular nuclear genes. The protein is DDT domain-containing protein PTM of Arabidopsis thaliana (Mouse-ear cress).